The primary structure comprises 468 residues: Tyrosine phenol-lyase (468 aa).

Lysine 260 bears the N6-(pyridoxal phosphate)lysine mark.

The protein belongs to the beta-eliminating lyase family. As to quaternary structure, homotetramer. Pyridoxal 5'-phosphate is required as a cofactor.

The enzyme catalyses L-tyrosine + H2O = phenol + pyruvate + NH4(+). The sequence is that of Tyrosine phenol-lyase from Lacrimispora saccharolytica (strain ATCC 35040 / DSM 2544 / NRCC 2533 / WM1) (Clostridium saccharolyticum).